We begin with the raw amino-acid sequence, 225 residues long: Thylakoid lumenal 17.9 kDa protein, chloroplastic (225 aa).

The protein localises to the plastid. The protein resides in the chloroplast thylakoid lumen. This chain is Thylakoid lumenal 17.9 kDa protein, chloroplastic, found in Arabidopsis thaliana (Mouse-ear cress).